The primary structure comprises 2560 residues: Plipastatin synthase subunit B (2560 aa).

The condensation 1 stretch occupies residues 7 to 310 (IQDIYPLSHM…NTVPVRIRSA (304 aa)). Residues 7 to 1042 (IQDIYPLSHM…AVKLMSLKEH (1036 aa)) are domain 1 (tyrosine-activating). The adenylation 1 stretch occupies residues 496-889 (TYRQLQVRAN…QAPGVKEAAV (394 aa)). Residues 965–1040 (APRTLIEADL…SMAVKLMSLK (76 aa)) enclose the Carrier 1 domain. Serine 1000 is modified (O-(pantetheine 4'-phosphoryl)serine). The segment at 1052 to 1342 (QRDVYPLSFS…NTLAMRSKPE (291 aa)) is condensation 2. The segment at 1052-2553 (QRDVYPLSFS…DLTLDELSEI (1502 aa)) is domain 2 (D-allo-threonine-activating). An adenylation 2 region spans residues 1527 to 1927 (TYRDLNEKAE…QYPMIKEAAV (401 aa)). A Carrier 2 domain is found at 2006–2080 (SPRNEIETVM…ELSARVRKDV (75 aa)). Serine 2041 is modified (O-(pantetheine 4'-phosphoryl)serine). The interval 2088–2553 (VEGEITWTPI…DLTLDELSEI (466 aa)) is epimerization.

The protein belongs to the ATP-dependent AMP-binding enzyme family. Requires pantetheine 4'-phosphate as cofactor.

Its function is as follows. This protein is a multifunctional enzyme, able to activate and polymerize the amino acids Tyr and Thr as part of the biosynthesis of the lipopeptide antibiotic plipastatin. The Thr residue is further converted to the D-allo-isomer form. The activation sites for these amino acids consist of individual domains. In Bacillus subtilis (strain 168), this protein is Plipastatin synthase subunit B (ppsB).